The primary structure comprises 194 residues: CASP-like protein 1B1 (194 aa).

The Cytoplasmic segment spans residues 1 to 24 (MASENGDKLELAFSAVPDPKPKKD). Residues 25-45 (WVILSLRVVAFFATASATLVM) form a helical membrane-spanning segment. Residues 46-77 (AFNKQTKGMVVATIGTNPVTITLTAMFQHTPA) lie on the Extracellular side of the membrane. Residues 78–98 (FIFFVIVNAIASFYNLLVIGV) traverse the membrane as a helical segment. Topologically, residues 99 to 111 (EILGPQYDYKGLR) are cytoplasmic. The helical transmembrane segment at 112 to 132 (LGLIAILDVMTMALAATGDGA) threads the bilayer. At 133–164 (ATFMAELGRNGNSHARWDKICDKFEAYCNRGG) the chain is on the extracellular side. Residues 165 to 185 (VALVASFVGLILLLVVTVMSI) form a helical membrane-spanning segment. At 186-194 (TKLLKLNRI) the chain is on the cytoplasmic side.

This sequence belongs to the Casparian strip membrane proteins (CASP) family. As to quaternary structure, homodimer and heterodimers.

Its subcellular location is the cell membrane. The sequence is that of CASP-like protein 1B1 from Glycine max (Soybean).